Consider the following 330-residue polypeptide: Polygalacturonase inhibitor 2 (330 aa).

An N-terminal signal peptide occupies residues 1–21 (MDKTMTLFLLLSTLLLTTSLA). Disulfide bonds link Cys-25–Cys-55 and Cys-56–Cys-63. 10 LRR repeats span residues 69–93 (NHRV…VGDL), 94–117 (PYLT…TIAK), 118–141 (LKNL…FLSQ), 142–166 (LKNL…LSSL), 167–192 (RKLE…TFSG), 194–215 (VPSL…LGNP), 217–237 (FYRI…LFGA), 238–260 (KKTT…KVKL), 261–285 (AKTL…WSKA), and 287–308 (FQLL…EYIQ). N-linked (GlcNAc...) asparagine glycosylation is found at Asn-106, Asn-120, and Asn-130. The N-linked (GlcNAc...) asparagine glycan is linked to Asn-291. Cystine bridges form between Cys-298–Cys-320 and Cys-322–Cys-329.

This sequence belongs to the polygalacturonase-inhibiting protein family.

The protein localises to the secreted. The protein resides in the cell wall. Its subcellular location is the membrane. Inhibitor of fungal polygalacturonase. It is an important factor for plant resistance to phytopathogenic fungi. The chain is Polygalacturonase inhibitor 2 (PGIP2) from Arabidopsis thaliana (Mouse-ear cress).